A 62-amino-acid chain; its full sequence is uncharacterized protein (62 aa).

Over residues 1-18 (MTTNRVDPLEQTSPNTPT) the composition is skewed to polar residues. The segment at 1-24 (MTTNRVDPLEQTSPNTPTSKREKA) is disordered.

This is an uncharacterized protein from Rickettsia conorii (strain ATCC VR-613 / Malish 7).